Consider the following 1407-residue polypeptide: MKDLLKFLKAQTKTEEFDAIKIALASPDMIRSWSFGEVKKPETINYRTFKPERDGLFCARIFGPVKDYECLCGKYKRLKHRGVICEKCGVEVTQTKVRRERMGHIELASPTAHIWFLKSLPSRIGLLLDMPLRDIERVLYFESYVVIEGGMTNLERQQILTEEQYLDALEEFGDEFDAKMGAEAIQALLKSMDLEQECEQLREELNETNSETKRKKLTKRIKLLEAFVQSGNKPEWMILTVLPVLPPDLRPLVPLDGGRFATSDLNDLYRRVINRNNRLKRLLDLAAPDIIVRNEKRMLQEAVDALLDNGRRGRAITGSNKRPLKSLADMIKGKQGRFRQNLLGKRVDYSGRSVITVGPYLRLHQCGLPKKMALELFKPFIYGKLELRGLATTIKAAKKMVEREEAVVWDILDEVIREHPVLLNRAPTLHRLGIQAFEPVLIEGKAIQLHPLVCAAYNADFDGDQMAVHVPLTLEAQLEARALMMSTNNILSPANGEPIIVPSQDVVLGLYYMTRDCVNAKGEGMVLTGPKEAERLYRSGLASLHARVKVRITEYEKDANGELVAKTSLKDTTVGRAILWMIVPKGLPYSIVNQALGKKAISKMLNTCYRILGLKPTVIFADQIMYTGFAYAARSGASVGIDDMVIPEKKHEIISEAEAEVAEIQEQFQSGLVTAGERYNKVIDIWAAANDRVSKAMMDNLQTETVINRDGQEEKQVSFNSIYMMADSGARGSAAQIRQLAGMRGLMAKPDGSIIETPITANFREGLNVLQYFISTHGARKGLADTALKTANSGYLTRRLVDVAQDLVVTEDDCGTHEGIMMTPVIEGGDVKEPLRDRVLGRVTAEDVLKPGTADILVPRNTLLHEQWCDLLEENSVDAVKVRSVVSCDTDFGVCAYCYGRDLARGHIINKGEAIGVIAAQSIGEPGTQLTMRTFHIGGAASRAAAESSIQVKNKGSIKLSNVKSVVNSSGKLVITSRNTELKLIDEFGRTKESYKVPYGAVLAKGDGEQVAGGETVANWDPHTMPVITEVSGFVRFTDMIDGQTITRQTDELTGLSSLVVLDSAERTAGGKDLRPALKIVDAQGNDVLIPGTDMPAQYFLPGKAIVQLEDGVQISSGDTLARIPQESGGTKDITGGLPRVADLFEARRPKEPAILAEISGIVSFGKETKGKRRLVITPVDGSDPYEEMIPKWRQLNVFEGERVERGDVISDGPEAPHDILRLRGVHAVTRYIVNEVQDVYRLQGVKINDKHIEVIVRQMLRKATIVNAGSSDFLEGEQVEYSRVKIANRELEANGKVGATYSRDLLGITKASLATESFISAASFQETTRVLTEAAVAGKRDELRGLKENVIVGRLIPAGTGYAYHQDRMRRRAAGEAPAAPQVTAEDASASLAELLNAGLGGSDNE.

Residues C70, C72, C85, and C88 each coordinate Zn(2+). Mg(2+)-binding residues include D460, D462, and D464. Positions 814, 888, 895, and 898 each coordinate Zn(2+). Residue K972 is modified to N6-acetyllysine.

It belongs to the RNA polymerase beta' chain family. The RNAP catalytic core consists of 2 alpha, 1 beta, 1 beta' and 1 omega subunit. When a sigma factor is associated with the core the holoenzyme is formed, which can initiate transcription. The cofactor is Mg(2+). Zn(2+) serves as cofactor.

The catalysed reaction is RNA(n) + a ribonucleoside 5'-triphosphate = RNA(n+1) + diphosphate. Functionally, DNA-dependent RNA polymerase catalyzes the transcription of DNA into RNA using the four ribonucleoside triphosphates as substrates. This chain is DNA-directed RNA polymerase subunit beta', found in Shigella boydii serotype 18 (strain CDC 3083-94 / BS512).